The sequence spans 1605 residues: GTPase-activating protein pac-1 (1605 aa).

Positions 1-574 (MEEHHRRLHV…QRFIALFNSS (574 aa)) are required for localization to adherens junctions. Disordered stretches follow at residues 293–430 (QRHP…ISTS), 529–556 (MRSGGASSATTTTTSNSGQQTSRSLNAP), and 574–593 (SKTSDGSGEHKKSRMKRSRT). Residues 323-334 (SKEDPSEDTGHD) show a composition bias toward basic and acidic residues. Composition is skewed to low complexity over residues 353 to 365 (RNASLRNRQSSRS), 420 to 430 (TTSSTSSISTS), and 530 to 552 (RSGGASSATTTTTSNSGQQTSRS). Residues 599–726 (RFALPGTILQ…WISVLQSSSE (128 aa)) enclose the PH domain. 2 stretches are compositionally biased toward polar residues: residues 728 to 745 (GIATGSSVDENELSTTGR) and 846 to 855 (KNSQLQSPTA). 2 disordered regions span residues 728–752 (GIATGSSVDENELSTTGRHNNNAVS) and 846–942 (KNSQ…AGAP). Residues 868 to 879 (SSSQTMATTSSS) show a composition bias toward low complexity. Over residues 908–917 (SGRKWKKSKA) the composition is skewed to basic residues. A compositionally biased stretch (low complexity) spans 928–941 (GSSSGSQQQGAAGA). The 199-residue stretch at 948 to 1146 (VRIADCPTGS…TLIHYNLWMF (199 aa)) folds into the Rho-GAP domain. Disordered regions lie at residues 1152-1176 (TEDAVPEQHPADGQNPLEPGGYGVG), 1207-1258 (EGKG…AASV), 1277-1339 (SRQT…RRKR), 1438-1533 (TSDY…ARRH), and 1554-1605 (GIRK…DELL). Positions 1211–1229 (QKIKNMLRRNSRRDKSKSK) are enriched in basic residues. Composition is skewed to polar residues over residues 1244–1257 (GWTQPTPSNTSAAS) and 1278–1300 (RQTVSPQMTSGSADGASSTRLDQ). A compositionally biased stretch (low complexity) spans 1301–1312 (SPSLESSLGSLP). Positions 1438 to 1453 (TSDYSTTSSAPLSTNP) are enriched in polar residues. The span at 1461–1476 (DQPNSSSDYASSDPSP) shows a compositional bias: low complexity. Polar residues-rich tracts occupy residues 1480–1493 (NPSTSPASRPSNLA) and 1500–1515 (HATSSSGQSHQPMSRS). The span at 1558 to 1575 (SSPDVSRDEVSDDEKNHQ) shows a compositional bias: basic and acidic residues.

As to quaternary structure, associated with the catenin-cadherin complex consisting of hmr-1, hmp-1 and hmp-2; this is mediated by interaction with picc-1.

It localises to the cytoplasm. The protein localises to the cell junction. The protein resides in the adherens junction. GTPase-activating protein for members of the Rho subfamily including Rac1, RhoA and cdc42 and other Ras-related subfamilies including let-60. Mediates radial (inner-outer) polarity and gastrulation by excluding par-6 from contacted cell surfaces; acts by inactivating cdc42 at inner cell surfaces which limits active cdc42 to outer cell surfaces devoid of cell-cell contacts, where cdc42 can bind and recruit par-6. Required for blastomere polarization. The chain is GTPase-activating protein pac-1 (pac-1) from Caenorhabditis elegans.